A 55-amino-acid polypeptide reads, in one-letter code: Large ribosomal subunit protein bL33 (55 aa).

This sequence belongs to the bacterial ribosomal protein bL33 family.

The polypeptide is Large ribosomal subunit protein bL33 (Burkholderia ambifaria (strain MC40-6)).